Here is a 360-residue protein sequence, read N- to C-terminus: Protein YIM1-1 (360 aa).

Belongs to the YIM1 family.

It is found in the lipid droplet. Its subcellular location is the mitochondrion. This chain is Protein YIM1-1 (YIM1-1), found in Lachancea thermotolerans (strain ATCC 56472 / CBS 6340 / NRRL Y-8284) (Yeast).